A 195-amino-acid polypeptide reads, in one-letter code: Imidazoleglycerol-phosphate dehydratase (195 aa).

It belongs to the imidazoleglycerol-phosphate dehydratase family.

The protein resides in the cytoplasm. It catalyses the reaction D-erythro-1-(imidazol-4-yl)glycerol 3-phosphate = 3-(imidazol-4-yl)-2-oxopropyl phosphate + H2O. It participates in amino-acid biosynthesis; L-histidine biosynthesis; L-histidine from 5-phospho-alpha-D-ribose 1-diphosphate: step 6/9. The protein is Imidazoleglycerol-phosphate dehydratase of Haloarcula marismortui (strain ATCC 43049 / DSM 3752 / JCM 8966 / VKM B-1809) (Halobacterium marismortui).